Here is a 382-residue protein sequence, read N- to C-terminus: Chaperone protein DnaJ (382 aa).

Residues 5–70 (DYYEVLGLQK…QKRAAYDQYG (66 aa)) form the J domain. The segment at 134–212 (GTTKDIQINT…CHGEGRVHKK (79 aa)) adopts a CR-type zinc-finger fold. The Zn(2+) site is built by Cys-147, Cys-150, Cys-164, Cys-167, Cys-186, Cys-189, Cys-200, and Cys-203. CXXCXGXG motif repeat units lie at residues 147 to 154 (CDSCGGSG), 164 to 171 (CPHCHGSG), 186 to 193 (CPTCHGSG), and 200 to 207 (CRNCHGEG).

It belongs to the DnaJ family. In terms of assembly, homodimer. Requires Zn(2+) as cofactor.

It is found in the cytoplasm. Participates actively in the response to hyperosmotic and heat shock by preventing the aggregation of stress-denatured proteins and by disaggregating proteins, also in an autonomous, DnaK-independent fashion. Unfolded proteins bind initially to DnaJ; upon interaction with the DnaJ-bound protein, DnaK hydrolyzes its bound ATP, resulting in the formation of a stable complex. GrpE releases ADP from DnaK; ATP binding to DnaK triggers the release of the substrate protein, thus completing the reaction cycle. Several rounds of ATP-dependent interactions between DnaJ, DnaK and GrpE are required for fully efficient folding. Also involved, together with DnaK and GrpE, in the DNA replication of plasmids through activation of initiation proteins. The sequence is that of Chaperone protein DnaJ from Haemophilus influenzae (strain ATCC 51907 / DSM 11121 / KW20 / Rd).